The primary structure comprises 96 residues: Putative defensin-like protein 263 (96 aa).

The signal sequence occupies residues Met1–Ala26. 4 cysteine pairs are disulfide-bonded: Cys48-Cys96, Cys67-Cys86, Cys73-Cys91, and Cys77-Cys93.

Belongs to the DEFL family.

The protein resides in the secreted. The chain is Putative defensin-like protein 263 from Arabidopsis thaliana (Mouse-ear cress).